Reading from the N-terminus, the 254-residue chain is Proteasome subunit alpha type-4 (254 aa).

Phosphothreonine is present on Thr-60. Positions 235–254 (QIEQEKQEQQEQDKKKKSNH) are disordered. Over residues 237 to 248 (EQEKQEQQEQDK) the composition is skewed to basic and acidic residues.

It belongs to the peptidase T1A family. As to quaternary structure, the 26S proteasome consists of a 20S proteasome core and two 19S regulatory subunits. The 20S proteasome core is composed of 28 subunits that are arranged in four stacked rings, resulting in a barrel-shaped structure. The two end rings are each formed by seven alpha subunits, and the two central rings are each formed by seven beta subunits. The catalytic chamber with the active sites is on the inside of the barrel. Interacts with CIC1.

Its subcellular location is the cytoplasm. The protein localises to the nucleus. In terms of biological role, the proteasome degrades poly-ubiquitinated proteins in the cytoplasm and in the nucleus. It is essential for the regulated turnover of proteins and for the removal of misfolded proteins. The proteasome is a multicatalytic proteinase complex that is characterized by its ability to cleave peptides with Arg, Phe, Tyr, Leu, and Glu adjacent to the leaving group at neutral or slightly basic pH. It has an ATP-dependent proteolytic activity. The chain is Proteasome subunit alpha type-4 (PRE6) from Saccharomyces cerevisiae (strain ATCC 204508 / S288c) (Baker's yeast).